The chain runs to 192 residues: Crossover junction endodeoxyribonuclease RuvC (192 aa).

Residues aspartate 9, glutamate 70, and aspartate 143 contribute to the active site. Mg(2+) contacts are provided by aspartate 9, glutamate 70, and aspartate 143. Residues 161 to 192 (GASVATTGPGSSSLTPAQRAWAEAEAKARRAR) are disordered. Positions 163–176 (SVATTGPGSSSLTP) are enriched in polar residues. The segment covering 182-192 (AEAEAKARRAR) has biased composition (basic and acidic residues).

It belongs to the RuvC family. Homodimer which binds Holliday junction (HJ) DNA. The HJ becomes 2-fold symmetrical on binding to RuvC with unstacked arms; it has a different conformation from HJ DNA in complex with RuvA. In the full resolvosome a probable DNA-RuvA(4)-RuvB(12)-RuvC(2) complex forms which resolves the HJ. The cofactor is Mg(2+).

The protein resides in the cytoplasm. It catalyses the reaction Endonucleolytic cleavage at a junction such as a reciprocal single-stranded crossover between two homologous DNA duplexes (Holliday junction).. In terms of biological role, the RuvA-RuvB-RuvC complex processes Holliday junction (HJ) DNA during genetic recombination and DNA repair. Endonuclease that resolves HJ intermediates. Cleaves cruciform DNA by making single-stranded nicks across the HJ at symmetrical positions within the homologous arms, yielding a 5'-phosphate and a 3'-hydroxyl group; requires a central core of homology in the junction. The consensus cleavage sequence is 5'-(A/T)TT(C/G)-3'. Cleavage occurs on the 3'-side of the TT dinucleotide at the point of strand exchange. HJ branch migration catalyzed by RuvA-RuvB allows RuvC to scan DNA until it finds its consensus sequence, where it cleaves and resolves the cruciform DNA. This Pseudarthrobacter chlorophenolicus (strain ATCC 700700 / DSM 12829 / CIP 107037 / JCM 12360 / KCTC 9906 / NCIMB 13794 / A6) (Arthrobacter chlorophenolicus) protein is Crossover junction endodeoxyribonuclease RuvC.